A 35-amino-acid polypeptide reads, in one-letter code: Mu-thomitoxin-Hme1c (35 aa).

3 disulfides stabilise this stretch: Cys-2-Cys-18, Cys-9-Cys-23, and Cys-17-Cys-34.

It belongs to the neurotoxin 07 (Beta/delta-agtx) family. As to expression, expressed by the venom gland.

It is found in the secreted. Its function is as follows. Gating-modifier toxin that inhibits mammalian and insect voltage-gated sodium channels. It shifts the voltage dependence of channel activation to more positive voltages. It shows potent activity on Nav1.4/SCN4A (IC(50)=103 nM), Nav1.5/SCN5A (IC(50)=268 nM) and Para/DmNav1 (IC(50)=555 nM) and lower activities on Nav1.2/SCN2A (IC(50)=1447 nM) and Nav1.6/SCN8A (IC(50)=3504 nM). In addition, at a concentration of 1 uM, the toxin inhibits 90-100% of sodium current through Nav1.2/SCN2A, Nav1.4/SCN4A, Nav1.5/SCN5A, Nav1.6/SCN8A and Para/DmNav1 channels, when the voltage of maximal activation of the channel in control conditions is applied. It binds to the S3-S4 helix-loop-helix motif in the voltage-sensing domain of repeat 1 (shown on hNav1.4/SCN4A). The toxin is amphiphilic and binds to both neutral and negatively charged lipid vesicles with high affinity. The hydrophobic face lies on the opposite side to the hydrophobic faces of classical gating modifiers. This chain is Mu-thomitoxin-Hme1c, found in Heriaeus mellotteei (Crab spider).